Here is a 96-residue protein sequence, read N- to C-terminus: Putative membrane protein insertion efficiency factor (96 aa).

The protein belongs to the UPF0161 family.

The protein resides in the cell inner membrane. Its function is as follows. Could be involved in insertion of integral membrane proteins into the membrane. This chain is Putative membrane protein insertion efficiency factor, found in Borreliella afzelii (strain PKo) (Borrelia afzelii).